Consider the following 942-residue polypeptide: Netrin receptor UNC5B-b (942 aa).

A signal peptide spans 1–30 (MYLSRIPGGAALAALLVALLLCCNFPPSIA). Over 31–380 (GIEYSDVLPD…LESTGDVALY (350 aa)) the chain is Extracellular. One can recognise an Ig-like domain in the interval 51-148 (PHFLLEPEDA…AGTTKSKRSY (98 aa)). 9 disulfides stabilise this stretch: C72-C133, C84-C131, C177-C228, C261-C298, C265-C302, C276-C288, C317-C351, C321-C356, and C329-C341. Residues 150–245 (RIAYLRKNFD…KRRSTTATVI (96 aa)) enclose the Ig-like C2-type domain. A glycan (N-linked (GlcNAc...) asparagine) is linked at N225. TSP type-1 domains lie at 249-303 (NGGW…TMCP) and 305-357 (DGGW…GLCM). A glycan (N-linked (GlcNAc...) asparagine) is linked at N350. Residues 381–401 (AGLVVAIFIIIILLMAVGIVV) traverse the membrane as a helical segment. Over 402–942 (YRRNCREFDT…MLVMATDGDC (541 aa)) the chain is Cytoplasmic. One can recognise a ZU5 domain in the interval 541 to 684 (NSVTGTFGSL…LGTYAFVGES (144 aa)). Positions 687 to 835 (RSAIKRLQLA…LEENVKSFDP (149 aa)) are UPA domain. The region spanning 863-940 (ICNSLDAPNS…EMMLVMATDG (78 aa)) is the Death domain.

Belongs to the unc-5 family. As to quaternary structure, interacts (via extracellular domain) with flrt3 (via extracellular domain). Interacts with rnd1.

It localises to the cell membrane. Plays a role in cell-cell adhesion during embryonic development. Receptor for netrin required for axon guidance. Mediates axon repulsion of neuronal growth cones in the developing nervous system upon ligand binding. The protein is Netrin receptor UNC5B-b of Xenopus laevis (African clawed frog).